Here is a 1792-residue protein sequence, read N- to C-terminus: uncharacterized protein (1792 aa).

A compositionally biased stretch (low complexity) spans 1–28 (MNNNNNNNNNSNNNNNSNNNNNGNSNNN). 13 disordered regions span residues 1–34 (MNNN…SGKG), 162–187 (TNIS…SHHH), 440–461 (KKRK…NKSS), 544–568 (VIDD…SIIN), 736–777 (NKNK…INSN), 837–979 (TKGK…NDLK), 1044–1071 (VSKS…KEQS), 1084–1106 (NMNN…NDNK), 1160–1215 (TSSG…VLER), 1257–1290 (NITA…NNNG), 1651–1686 (LRSK…GRKK), 1704–1731 (PRKK…NSEK), and 1742–1761 (IENK…NLNN). A compositionally biased stretch (polar residues) spans 169 to 182 (KQPISSNQHPYQQK). The span at 550-559 (KRNKKEKKKT) shows a compositional bias: basic residues. Over residues 741–776 (PNNINSNDNNNKNDDNNNNNNKNVDGNNNNNNNINS) the composition is skewed to low complexity. The span at 838 to 847 (KGKKKGRKKK) shows a compositional bias: basic residues. The segment covering 856 to 873 (NIKEDIKSSKKDKKKDNI) has biased composition (basic and acidic residues). Positions 874–924 (NDNNNDNNNDNNNDNNNDNNNDNNNDNNNDNNNNNNNNNNNNNNNNNNNHN) are enriched in low complexity. Basic residues predominate over residues 943-954 (KKKTRQYRKKSK). The span at 955-966 (ITNDDNNEKIKQ) shows a compositional bias: basic and acidic residues. Over residues 1045–1057 (SKSNIPSSFSSPP) the composition is skewed to low complexity. 3 stretches are compositionally biased toward basic and acidic residues: residues 1060–1071 (TNNKNDIDKEQS), 1088–1106 (EKSK…NDNK), and 1166–1192 (NKEE…KNVD). Positions 1205–1215 (RKKRKKDVLER) are enriched in basic residues. Low complexity predominate over residues 1261-1289 (NNNNDNNKNNDNDNNNNNNDNIINNNNNN). 2 stretches are compositionally biased toward basic residues: residues 1660 to 1686 (KEHK…GRKK) and 1704 to 1717 (PRKK…RKSK).

This is an uncharacterized protein from Plasmodium falciparum (isolate 3D7).